A 468-amino-acid chain; its full sequence is MTVVTRFAPSPTGFLHIGGARTALFNWLFARHHGGRFLLRIEDTDRVRSTPEAVAAIFDGLEWLGLDWDEEPTFQFARAARHAEAAHELVAKGLAYRCYCTPDELTAMREEQKAKGLPPRYNGLWRDRDPSEAPAGVAPVIRLKAPQDGETTITDSVQGAVTVANNQLDDMILLRSDGTPTYMLSVVVDDHDMGVTHVIRGDDHLTNAFRQTQLYWALGWETPVFAHIPLIHGADGAKLSKRHGALGAEAYRDMGFLPEALRNYLVRLGWAHGDDEVFTTEQAVEWFSLESIGRSPSRFDMQKLTALNGSYMRETDDDRLTALLVPRLESTLGLDIPAAGHALLRAGMAGLKERAKTLVELADLAAFYVRPRPLAIDAKAEKALDDEGRTILAALIDKLDDFSPWTRDSLENLARVMSEERGVKLGKVAQPIRAALTGSTVSPPIFEVMEILGPDETLGRLRDAQSHS.

The 'HIGH' region signature appears at 9–19 (PSPTGFLHIGG). Residues 238 to 242 (KLSKR) carry the 'KMSKS' region motif. Residue lysine 241 coordinates ATP.

The protein belongs to the class-I aminoacyl-tRNA synthetase family. Glutamate--tRNA ligase type 1 subfamily. In terms of assembly, monomer.

The protein resides in the cytoplasm. It catalyses the reaction tRNA(Glu) + L-glutamate + ATP = L-glutamyl-tRNA(Glu) + AMP + diphosphate. Functionally, catalyzes the attachment of glutamate to tRNA(Glu) in a two-step reaction: glutamate is first activated by ATP to form Glu-AMP and then transferred to the acceptor end of tRNA(Glu). The polypeptide is Glutamate--tRNA ligase 2 (Rhodospirillum rubrum (strain ATCC 11170 / ATH 1.1.1 / DSM 467 / LMG 4362 / NCIMB 8255 / S1)).